Reading from the N-terminus, the 263-residue chain is Tryptophan synthase alpha chain (263 aa).

Catalysis depends on proton acceptor residues Glu-49 and Asp-60.

Belongs to the TrpA family. As to quaternary structure, tetramer of two alpha and two beta chains.

It carries out the reaction (1S,2R)-1-C-(indol-3-yl)glycerol 3-phosphate + L-serine = D-glyceraldehyde 3-phosphate + L-tryptophan + H2O. It participates in amino-acid biosynthesis; L-tryptophan biosynthesis; L-tryptophan from chorismate: step 5/5. Its function is as follows. The alpha subunit is responsible for the aldol cleavage of indoleglycerol phosphate to indole and glyceraldehyde 3-phosphate. This chain is Tryptophan synthase alpha chain, found in Clostridium kluyveri (strain NBRC 12016).